The chain runs to 127 residues: Aspartate 1-decarboxylase (127 aa).

The active-site Schiff-base intermediate with substrate; via pyruvic acid is the serine 25. Serine 25 bears the Pyruvic acid (Ser) mark. Residue threonine 57 participates in substrate binding. Tyrosine 58 (proton donor) is an active-site residue. 73-75 (GAA) contributes to the substrate binding site.

It belongs to the PanD family. In terms of assembly, heterooctamer of four alpha and four beta subunits. Pyruvate is required as a cofactor. In terms of processing, is synthesized initially as an inactive proenzyme, which is activated by self-cleavage at a specific serine bond to produce a beta-subunit with a hydroxyl group at its C-terminus and an alpha-subunit with a pyruvoyl group at its N-terminus.

The protein resides in the cytoplasm. It carries out the reaction L-aspartate + H(+) = beta-alanine + CO2. The protein operates within cofactor biosynthesis; (R)-pantothenate biosynthesis; beta-alanine from L-aspartate: step 1/1. Catalyzes the pyruvoyl-dependent decarboxylation of aspartate to produce beta-alanine. This chain is Aspartate 1-decarboxylase, found in Desulfitobacterium hafniense (strain DSM 10664 / DCB-2).